The chain runs to 358 residues: Endoplasmic reticulum junction formation protein lunapark-B (358 aa).

At 1 to 45 (MGAIISRWKTKLTTVEQLENIDKEIKQLEEFRAKNQRLQKLWVGR) the chain is on the cytoplasmic side. Positions 9–41 (KTKLTTVEQLENIDKEIKQLEEFRAKNQRLQKL) form a coiled coil. The chain crosses the membrane as a helical span at residues 46–66 (LLLYSSALYLLISLFVYLLYL). Over 67 to 69 (PEQ) the chain is Lumenal. A helical transmembrane segment spans residues 70–90 (WLLRLAMALPFFIYPVLVWFI). The Cytoplasmic portion of the chain corresponds to 91–358 (RRFLIFLFSK…SRGMDKHGRA (268 aa)). Positions 99–128 (SKRSERNNDKLEDLKATKKKILEEVMETET) form a coiled coil. The C4-type; plays a role in ER morphology zinc finger occupies 275-300 (CQQCFSHNGMALKEEFEYLAFRCAYC). Residues 320–358 (NFEKRLRAESSTPGPAPHSATDTEESAPPSRGMDKHGRA) form a disordered region.

This sequence belongs to the lunapark family. In terms of assembly, homodimer; homodimerization requires the C4-type zinc finger motif and decreases during mitosis in a phosphorylation-dependent manner. Phosphorylated. Phosphorylation occurs during interphase. Phosphorylation also occurs during mitosis; these phosphorylations reduce both its homodimerization and the ER three-way tubular junction formation.

It localises to the endoplasmic reticulum membrane. Its function is as follows. Endoplasmic reticulum (ER)-shaping membrane protein that plays a role in determining ER morphology. Involved in the stabilization of nascent three-way ER tubular junctions within the ER network. May also play a role as a curvature-stabilizing protein within three-way ER tubular junction network. The chain is Endoplasmic reticulum junction formation protein lunapark-B (lnpkb) from Takifugu rubripes (Japanese pufferfish).